The following is a 466-amino-acid chain: Light-independent protochlorophyllide reductase subunit N (466 aa).

The [4Fe-4S] cluster site is built by Cys23, Cys48, and Cys108.

This sequence belongs to the BchN/ChlN family. Protochlorophyllide reductase is composed of three subunits; ChlL, ChlN and ChlB. Forms a heterotetramer of two ChlB and two ChlN subunits. It depends on [4Fe-4S] cluster as a cofactor.

It carries out the reaction chlorophyllide a + oxidized 2[4Fe-4S]-[ferredoxin] + 2 ADP + 2 phosphate = protochlorophyllide a + reduced 2[4Fe-4S]-[ferredoxin] + 2 ATP + 2 H2O. It functions in the pathway porphyrin-containing compound metabolism; chlorophyll biosynthesis (light-independent). In terms of biological role, component of the dark-operative protochlorophyllide reductase (DPOR) that uses Mg-ATP and reduced ferredoxin to reduce ring D of protochlorophyllide (Pchlide) to form chlorophyllide a (Chlide). This reaction is light-independent. The NB-protein (ChlN-ChlB) is the catalytic component of the complex. This Synechococcus elongatus (strain ATCC 33912 / PCC 7942 / FACHB-805) (Anacystis nidulans R2) protein is Light-independent protochlorophyllide reductase subunit N.